Reading from the N-terminus, the 192-residue chain is Fe/S biogenesis protein NfuA (192 aa).

2 residues coordinate [4Fe-4S] cluster: Cys149 and Cys152.

Belongs to the NfuA family. As to quaternary structure, homodimer. It depends on [4Fe-4S] cluster as a cofactor.

Functionally, involved in iron-sulfur cluster biogenesis. Binds a 4Fe-4S cluster, can transfer this cluster to apoproteins, and thereby intervenes in the maturation of Fe/S proteins. Could also act as a scaffold/chaperone for damaged Fe/S proteins. The protein is Fe/S biogenesis protein NfuA of Shewanella halifaxensis (strain HAW-EB4).